Here is a 277-residue protein sequence, read N- to C-terminus: Carbonyl reductase [NADPH] 1 (277 aa).

Ser-2 bears the N-acetylserine mark. 2 positions are modified to phosphoserine: Ser-2 and Ser-30. Residues 10–34 (VTGANKGIGFVIVRDLCRRFSGDVV), 63–64 (DI), and Asn-90 contribute to the NADP(+) site. Glutathione-binding positions include 95–97 (FKT) and Gln-106. Ser-140 lines the substrate pocket. 193–194 (AY) is a glutathione binding site. Residue Tyr-194 is the Proton acceptor of the active site. Residues 194–198 (YGVTK) and 231–233 (VRT) each bind NADP(+). Lys-239 is subject to N6-1-carboxyethyl lysine.

The protein belongs to the short-chain dehydrogenases/reductases (SDR) family. In terms of assembly, monomer.

It is found in the cytoplasm. The enzyme catalyses a secondary alcohol + NADP(+) = a ketone + NADPH + H(+). It carries out the reaction prostaglandin F2alpha + NADP(+) = prostaglandin E2 + NADPH + H(+). It catalyses the reaction prostaglandin E1 + NADP(+) = 15-oxoprostaglandin E1 + NADPH + H(+). The catalysed reaction is menadione + NADPH + H(+) = menadiol + NADP(+). The enzyme catalyses prostaglandin D2 + NADP(+) = 15-oxoprostaglandin D2 + NADPH + H(+). It carries out the reaction prostaglandin E2 + NADP(+) = 15-oxoprostaglandin E2 + NADPH + H(+). It catalyses the reaction prostaglandin F2alpha + NADP(+) = 15-oxoprostaglandin F2alpha + NADPH + H(+). The catalysed reaction is daunorubicin + NADPH + H(+) = 13-dihydrodaunorubicin + NADP(+). The enzyme catalyses S-nitrosoglutathione + NADPH + H(+) = S-(hydroxysulfenamide)glutathione + NADP(+). It carries out the reaction a primary alcohol + NADP(+) = an aldehyde + NADPH + H(+). It catalyses the reaction cortisol + NADPH + H(+) = 20beta-dihydrocortisol + NADP(+). The catalysed reaction is corticosterone + NADPH + H(+) = 20beta-dihydrocorticosterone + NADP(+). In terms of biological role, NADPH-dependent reductase with broad substrate specificity. Catalyzes the reduction of a wide variety of carbonyl compounds including quinones, prostaglandins, menadione, plus various xenobiotics. Catalyzes the reduction of the antitumor anthracyclines doxorubicin and daunorubicin to the cardiotoxic compounds doxorubicinol and daunorubicinol. Can convert prostaglandin E to prostaglandin F2-alpha. Can bind glutathione, which explains its higher affinity for glutathione-conjugated substrates. Catalyzes the reduction of S-nitrosoglutathione. In addition, participates in the glucocorticoid metabolism by catalyzing the NADPH-dependent cortisol/corticosterone into 20beta-dihydrocortisol (20b-DHF) or 20beta-corticosterone (20b-DHB), which are weak agonists of NR3C1 and NR3C2 in adipose tissue. This chain is Carbonyl reductase [NADPH] 1, found in Bos taurus (Bovine).